The chain runs to 500 residues: NAD(P)H-quinone oxidoreductase chain 4, chloroplastic (500 aa).

Helical transmembrane passes span 4-24 (FPWL…LFFL), 35-55 (YTLC…CYHF), 87-107 (FGPI…AWPV), 134-154 (LLLF…LLSM), 167-187 (FILY…GIGL), 208-228 (ALEI…SPII), 242-262 (HYST…YGLV), 272-292 (AHSI…VYAA), 305-325 (IAYS…SITD), 330-350 (GALL…FLAG), 364-384 (MGGM…LSMA), 386-406 (LALP…GIIT), 416-436 (ILIT…SLSM), and 462-482 (LFVS…PDFL).

The protein belongs to the complex I subunit 4 family.

It localises to the plastid. The protein localises to the chloroplast thylakoid membrane. The enzyme catalyses a plastoquinone + NADH + (n+1) H(+)(in) = a plastoquinol + NAD(+) + n H(+)(out). It catalyses the reaction a plastoquinone + NADPH + (n+1) H(+)(in) = a plastoquinol + NADP(+) + n H(+)(out). The polypeptide is NAD(P)H-quinone oxidoreductase chain 4, chloroplastic (Pelargonium hortorum (Common geranium)).